A 153-amino-acid chain; its full sequence is RNA-binding protein OPG065 (153 aa).

A Z-binding domain is found at 1-33 (MEKREVNKALYDLQRSAMVYSSNDTPPRWSTTM). Positions 22 to 34 (SNDTPPRWSTTMD) are enriched in polar residues. Residues 22-44 (SNDTPPRWSTTMDADTRPTDSDA) form a disordered region. The DRBM domain maps to 80-147 (NPVTVINEYC…AKLAVDKLLS (68 aa)).

The protein belongs to the orthopoxvirus OPG065 family. Interacts with host G1P2/ISG15. Interacts with host EIF2AK2/PKR. Interacts with host ZBP1.

RNA-binding protein that plays a role in the inhibition of multiple cellular antiviral responses activated by double-stranded RNA (dsRNA), such as inhibition of PKR activation, necroptosis, and IFN-mediated antiviral activities. Recognizes and binds Z-RNA structures via its Z-binding domain and dsRNA via its DRBM domain: RNA-binding activity is required to escape host ZBP1-dependent necroptosis. Mechanistically, the Z-binding domain binds Z-RNAs that are produced during vaccinia virus infection, thereby competing with Z-RNA detection by host ZBP1, suppressing ZBP1-dependent necroptosis. Acts as a key inhibitor of the interferon response by blocking the phosphorylation and subsequent activation of IRF3 and IRF7 kinases that are required for interferon-alpha gene expression. Inhibits NF-kappa-B activation and the ubiquitin-like protein ISG15, which is an early antiviral protein. The binding with host ISG15 subsequently blocks host ISGylation. In Monkeypox virus, this protein is RNA-binding protein OPG065 (OPG065).